Reading from the N-terminus, the 466-residue chain is tRNA-2-methylthio-N(6)-dimethylallyladenosine synthase (466 aa).

The MTTase N-terminal domain occupies 3 to 123; it reads KKLYIKTYGC…LPEMVARAVR (121 aa). 6 residues coordinate [4Fe-4S] cluster: Cys12, Cys48, Cys86, Cys162, Cys166, and Cys169. Positions 148–381 constitute a Radical SAM core domain; it reads SPAGPSAFLS…QQLLTAQQTA (234 aa). In terms of domain architecture, TRAM spans 384-446; it reads TACVGRVQPV…ANSLSGTVVV (63 aa).

Belongs to the methylthiotransferase family. MiaB subfamily. Monomer. [4Fe-4S] cluster is required as a cofactor.

Its subcellular location is the cytoplasm. It carries out the reaction N(6)-dimethylallyladenosine(37) in tRNA + (sulfur carrier)-SH + AH2 + 2 S-adenosyl-L-methionine = 2-methylsulfanyl-N(6)-dimethylallyladenosine(37) in tRNA + (sulfur carrier)-H + 5'-deoxyadenosine + L-methionine + A + S-adenosyl-L-homocysteine + 2 H(+). Its function is as follows. Catalyzes the methylthiolation of N6-(dimethylallyl)adenosine (i(6)A), leading to the formation of 2-methylthio-N6-(dimethylallyl)adenosine (ms(2)i(6)A) at position 37 in tRNAs that read codons beginning with uridine. The sequence is that of tRNA-2-methylthio-N(6)-dimethylallyladenosine synthase from Rhodospirillum centenum (strain ATCC 51521 / SW).